Consider the following 275-residue polypeptide: Uroplakin-3b (275 aa).

An N-terminal signal peptide occupies residues 1 to 26; that stretch reads MVRTRWQPPLRALLLLVLVWLPQSLS. At 27-196 the chain is on the lumenal side; it reads LDLIAYVPQI…DTWPGRRSGC (170 aa). Asn-77 is a glycosylation site (N-linked (GlcNAc...) asparagine). Residues 197–217 form a helical membrane-spanning segment; that stretch reads MIVITSILSALAGLLLLAFLA. The Cytoplasmic segment spans residues 218–275; it reads ASTTRFSSLWWPEEAPEQLRIGSFMGKRYMTHHIPPSEAATLPVGCEPGLDPLPSLSP.

This sequence belongs to the uroplakin-3 family. Heterodimer with uroplakin-1B (UPK1B). Expression is urothelium-specific.

Its subcellular location is the cell membrane. Component of the asymmetric unit membrane (AUM); a highly specialized biomembrane elaborated by terminally differentiated urothelial cells. May play an important role in AUM-cytoskeleton interaction in terminally differentiated urothelial cells. It also contributes to the formation of urothelial glycocalyx which may play an important role in preventing bacterial adherence. In Mus musculus (Mouse), this protein is Uroplakin-3b (Upk3b).